The sequence spans 379 residues: Gonadotropin-releasing hormone II receptor (379 aa).

Over 1 to 45 the chain is Extracellular; sequence MSGNTTLLLSNPTNVLDNSSVLNVSVSPPVLKWETPTFTTAARFR. N-linked (GlcNAc...) asparagine glycans are attached at residues Asn4, Asn18, and Asn23. The chain crosses the membrane as a helical span at residues 46–65; that stretch reads VAATLVLFVFAAASNLSVLL. Over 66-80 the chain is Cytoplasmic; the sequence is SVTRGRGRRLASHLR. A helical transmembrane segment spans residues 81–100; that stretch reads PLIASLASADLVMTFVVMPL. Topologically, residues 101 to 118 are extracellular; the sequence is DAVWNVTVQWYAGDAMCK. The N-linked (GlcNAc...) asparagine glycan is linked to Asn105. Cysteines 117 and 194 form a disulfide. Residues 119 to 140 form a helical membrane-spanning segment; sequence LMCFLKLFAMHSAAFILVVVSL. The Cytoplasmic portion of the chain corresponds to 141–167; the sequence is DRHHAILHPLDTLDAGRRNRRMLLTAW. Residues 168–184 form a helical membrane-spanning segment; that stretch reads ILSLLLASPQLFIFRAI. The Extracellular portion of the chain corresponds to 185–210; sequence KAKGVDFVQCATHGSFQQHWQETAYN. Residues 211–230 traverse the membrane as a helical segment; sequence MFHFVTLYVFPLLVMSLCYT. Over 231–283 the chain is Cytoplasmic; that stretch reads RILVEINRQMHRSKDKAGEPCLRRSGTDMIPKARMKTLKMTIIIVASFVICWT. A helical transmembrane segment spans residues 284 to 302; sequence PYYLLGIWYWFQPQMLHVI. Over 303–308 the chain is Extracellular; sequence PDYVHH. Residues 309-328 traverse the membrane as a helical segment; it reads VFFVFGNLNTCCDPVIYGFF. Topologically, residues 329 to 379 are cytoplasmic; the sequence is TPSFRADLSRCFCWRNQNASAKSLPHFSGHRREVSGEAESDLGSGDQPSGQ. A disordered region spans residues 355-379; that stretch reads FSGHRREVSGEAESDLGSGDQPSGQ.

It belongs to the G-protein coupled receptor 1 family. In terms of processing, phosphorylated on the C-terminal cytoplasmic tail.

It localises to the cell membrane. Its function is as follows. Receptor for gonadotropin releasing hormone II (GnRH II). This receptor mediates its action by association with G proteins that activate a phosphatidylinositol-calcium second messenger system. This is Gonadotropin-releasing hormone II receptor from Clarias gariepinus (North African catfish).